Reading from the N-terminus, the 247-residue chain is DNA repair protein RecO (247 aa).

This sequence belongs to the RecO family.

Functionally, involved in DNA repair and RecF pathway recombination. The sequence is that of DNA repair protein RecO from Methylocella silvestris (strain DSM 15510 / CIP 108128 / LMG 27833 / NCIMB 13906 / BL2).